Here is a 396-residue protein sequence, read N- to C-terminus: Elongation factor Tu (396 aa).

Residues 10 to 205 (KPHVNIGTIG…ACDESIPDPE (196 aa)) enclose the tr-type G domain. Positions 19–26 (GHVDHGKT) are G1. A GTP-binding site is contributed by 19-26 (GHVDHGKT). Position 26 (T26) interacts with Mg(2+). The segment at 62 to 66 (GITIN) is G2. The segment at 83-86 (DAPG) is G3. GTP is bound by residues 83 to 87 (DAPGH) and 138 to 141 (NKCD). The tract at residues 138 to 141 (NKCD) is G4. The segment at 175–177 (SAL) is G5.

The protein belongs to the TRAFAC class translation factor GTPase superfamily. Classic translation factor GTPase family. EF-Tu/EF-1A subfamily. Monomer.

It is found in the cytoplasm. It carries out the reaction GTP + H2O = GDP + phosphate + H(+). Its function is as follows. GTP hydrolase that promotes the GTP-dependent binding of aminoacyl-tRNA to the A-site of ribosomes during protein biosynthesis. In Corynebacterium jeikeium (strain K411), this protein is Elongation factor Tu.